A 199-amino-acid chain; its full sequence is 3-isopropylmalate dehydratase small subunit (199 aa).

The protein belongs to the LeuD family. LeuD type 1 subfamily. In terms of assembly, heterodimer of LeuC and LeuD.

The enzyme catalyses (2R,3S)-3-isopropylmalate = (2S)-2-isopropylmalate. It functions in the pathway amino-acid biosynthesis; L-leucine biosynthesis; L-leucine from 3-methyl-2-oxobutanoate: step 2/4. In terms of biological role, catalyzes the isomerization between 2-isopropylmalate and 3-isopropylmalate, via the formation of 2-isopropylmaleate. In Bacillus pumilus (strain SAFR-032), this protein is 3-isopropylmalate dehydratase small subunit.